The sequence spans 357 residues: tRNA-specific 2-thiouridylase MnmA (357 aa).

ATP is bound by residues 8–15 (GISGGVDS) and Ile34. Residue Cys96 is the Nucleophile of the active site. Cys96 and Cys192 are joined by a disulfide. Gly120 contacts ATP. The interaction with tRNA stretch occupies residues 142–144 (KDQ). Catalysis depends on Cys192, which acts as the Cysteine persulfide intermediate. An interaction with tRNA region spans residues 301-302 (RY).

It belongs to the MnmA/TRMU family.

Its subcellular location is the cytoplasm. The catalysed reaction is S-sulfanyl-L-cysteinyl-[protein] + uridine(34) in tRNA + AH2 + ATP = 2-thiouridine(34) in tRNA + L-cysteinyl-[protein] + A + AMP + diphosphate + H(+). Catalyzes the 2-thiolation of uridine at the wobble position (U34) of tRNA, leading to the formation of s(2)U34. This Chlorobium phaeobacteroides (strain DSM 266 / SMG 266 / 2430) protein is tRNA-specific 2-thiouridylase MnmA.